The sequence spans 202 residues: Ribonuclease HII (202 aa).

An RNase H type-2 domain is found at 18-202 (TYICGVDEAG…FAPVAKLLKQ (185 aa)). The a divalent metal cation site is built by Asp-24, Glu-25, and Asp-116.

Belongs to the RNase HII family. The cofactor is Mn(2+). Mg(2+) is required as a cofactor.

It localises to the cytoplasm. It carries out the reaction Endonucleolytic cleavage to 5'-phosphomonoester.. Endonuclease that specifically degrades the RNA of RNA-DNA hybrids. This is Ribonuclease HII from Acholeplasma laidlawii (strain PG-8A).